We begin with the raw amino-acid sequence, 211 residues long: FMN-dependent NADH:quinone oxidoreductase (211 aa).

Residues Ser17–Ser19, Met102–Leu105, and Ser146–Gly149 contribute to the FMN site.

Belongs to the azoreductase type 1 family. As to quaternary structure, homodimer. FMN is required as a cofactor.

The enzyme catalyses 2 a quinone + NADH + H(+) = 2 a 1,4-benzosemiquinone + NAD(+). It catalyses the reaction N,N-dimethyl-1,4-phenylenediamine + anthranilate + 2 NAD(+) = 2-(4-dimethylaminophenyl)diazenylbenzoate + 2 NADH + 2 H(+). Quinone reductase that provides resistance to thiol-specific stress caused by electrophilic quinones. Functionally, also exhibits azoreductase activity. Catalyzes the reductive cleavage of the azo bond in aromatic azo compounds to the corresponding amines. This chain is FMN-dependent NADH:quinone oxidoreductase, found in Macrococcus caseolyticus (strain JCSC5402) (Macrococcoides caseolyticum).